Consider the following 578-residue polypeptide: Kelch-like protein 30 (578 aa).

Positions 33 to 100 (ADVTLLVGGR…VYTGRLTITQ (68 aa)) constitute a BTB domain. The BACK domain occupies 153 to 255 (KAWAFLRENF…EACRAALSQG (103 aa)). 6 Kelch repeats span residues 270–326 (VLVV…ALNN), 327–377 (NIYV…ALNG), 378–422 (EIYV…GCRG), 424–471 (LYLV…ALHG), 473–513 (LYLI…PLGD), and 514–563 (ALYV…TVFL).

The sequence is that of Kelch-like protein 30 (KLHL30) from Homo sapiens (Human).